A 672-amino-acid polypeptide reads, in one-letter code: Beta-galactosidase BgaB (672 aa).

Arginine 109 is a substrate binding site. Position 113 (cysteine 113) interacts with Zn(2+). Asparagine 147 is a substrate binding site. The active-site Proton donor is glutamate 148. Residues cysteine 156, cysteine 158, and cysteine 161 each contribute to the Zn(2+) site. Catalysis depends on glutamate 303, which acts as the Nucleophile. Substrate contacts are provided by residues tryptophan 311 and 351–354 (EKFH).

This sequence belongs to the glycosyl hydrolase 42 family.

The enzyme catalyses Hydrolysis of terminal non-reducing beta-D-galactose residues in beta-D-galactosides.. This Geobacillus sp. (strain Y412MC61) protein is Beta-galactosidase BgaB.